We begin with the raw amino-acid sequence, 70 residues long: Brevinin-1PLc (70 aa).

Residues 1 to 22 (MFTLKKSMLLLFFLGTINLSLC) form the signal peptide. The propeptide occupies 23-44 (EEERNAEEERRDEPDEMDVEVE). A disulfide bridge links C64 with C70.

Expressed by the skin glands.

Its subcellular location is the secreted. Its function is as follows. Antimicrobial activity against the Gram-negative bacterium E.coli, the Gram-positive bacterium S.aureus and the yeast C.albicans. This chain is Brevinin-1PLc, found in Lithobates palustris (Pickerel frog).